Here is a 404-residue protein sequence, read N- to C-terminus: Cysteine desulfurase IscS (404 aa).

Residues 75–76 (AT), asparagine 155, glutamine 183, and 203–205 (SAH) contribute to the pyridoxal 5'-phosphate site. The residue at position 206 (lysine 206) is an N6-(pyridoxal phosphate)lysine. Threonine 243 serves as a coordination point for pyridoxal 5'-phosphate. The Cysteine persulfide intermediate role is filled by cysteine 328. Residue cysteine 328 participates in [2Fe-2S] cluster binding.

Belongs to the class-V pyridoxal-phosphate-dependent aminotransferase family. NifS/IscS subfamily. In terms of assembly, homodimer. Forms a heterotetramer with IscU, interacts with other sulfur acceptors. Requires pyridoxal 5'-phosphate as cofactor.

The protein localises to the cytoplasm. The enzyme catalyses (sulfur carrier)-H + L-cysteine = (sulfur carrier)-SH + L-alanine. It functions in the pathway cofactor biosynthesis; iron-sulfur cluster biosynthesis. Its function is as follows. Master enzyme that delivers sulfur to a number of partners involved in Fe-S cluster assembly, tRNA modification or cofactor biosynthesis. Catalyzes the removal of elemental sulfur atoms from cysteine to produce alanine. Functions as a sulfur delivery protein for Fe-S cluster synthesis onto IscU, an Fe-S scaffold assembly protein, as well as other S acceptor proteins. This chain is Cysteine desulfurase IscS, found in Buchnera aphidicola subsp. Baizongia pistaciae (strain Bp).